The primary structure comprises 124 residues: UPF0299 membrane protein VIBHAR_02118 (124 aa).

The next 4 helical transmembrane spans lie at 6 to 26, 35 to 55, 72 to 92, and 95 to 115; these read LLQL…LGIG, VSVP…TLGL, MILL…MLLA, and LPII…LAWF.

The protein belongs to the UPF0299 family.

The protein localises to the cell inner membrane. The chain is UPF0299 membrane protein VIBHAR_02118 from Vibrio campbellii (strain ATCC BAA-1116).